The following is a 199-amino-acid chain: 7-methyl-GTP pyrophosphatase (199 aa).

Catalysis depends on D76, which acts as the Proton acceptor.

The protein belongs to the Maf family. YceF subfamily. A divalent metal cation serves as cofactor.

It is found in the cytoplasm. The enzyme catalyses N(7)-methyl-GTP + H2O = N(7)-methyl-GMP + diphosphate + H(+). Nucleoside triphosphate pyrophosphatase that hydrolyzes 7-methyl-GTP (m(7)GTP). May have a dual role in cell division arrest and in preventing the incorporation of modified nucleotides into cellular nucleic acids. The chain is 7-methyl-GTP pyrophosphatase from Hahella chejuensis (strain KCTC 2396).